Reading from the N-terminus, the 387-residue chain is Peptostreptococcal albumin-binding protein (387 aa).

Positions 1 to 26 (MKLNKKLLMAALAGAIVVGGGVNTFA) are cleaved as a signal peptide. A disordered region spans residues 122–155 (LFDKHELGGLGKDKGPGRFDENGWENNEHGYETR). The interval 213-265 (TIDQWLLKNAKEDAIAELKKAGITSDFYFNAINKAKTVEEVNALKNEILKAHA) is GA module. Positions 266 to 360 (GKEVNPSTPE…EKAALPEAGR (95 aa)) are disordered. A compositionally biased stretch (polar residues) spans 270 to 282 (NPSTPEVTPSVPQ). A compositionally biased stretch (basic and acidic residues) spans 298 to 360 (GTKEDGKKEN…EKAALPEAGR (63 aa)). The LPXTG sorting signal signature appears at 355-359 (LPEAG). Position 358 is a pentaglycyl murein peptidoglycan amidated alanine (Ala358). A propeptide spans 359-387 (GRRKAEILTLAAASLSSVAGAFISLKKRK) (removed by sortase).

The protein resides in the secreted. It is found in the cell wall. Functionally, binds serum albumin. The protein is Peptostreptococcal albumin-binding protein (pab) of Finegoldia magna (Peptostreptococcus magnus).